The primary structure comprises 503 residues: Maturase K (503 aa).

The protein belongs to the intron maturase 2 family. MatK subfamily.

The protein resides in the plastid. Its subcellular location is the chloroplast. In terms of biological role, usually encoded in the trnK tRNA gene intron. Probably assists in splicing its own and other chloroplast group II introns. The protein is Maturase K of Rosa californica (California wild rose).